We begin with the raw amino-acid sequence, 338 residues long: DNA-directed RNA polymerase subunit alpha (338 aa).

An alpha N-terminal domain (alpha-NTD) region spans residues 1 to 233 (MYKNWRELIK…EQLQIFINFD (233 aa)). The tract at residues 250 to 338 (INENLYRSVE…KMIQEGKEDL (89 aa)) is alpha C-terminal domain (alpha-CTD).

Belongs to the RNA polymerase alpha chain family. As to quaternary structure, homodimer. The RNAP catalytic core consists of 2 alpha, 1 beta, 1 beta' and 1 omega subunit. When a sigma factor is associated with the core the holoenzyme is formed, which can initiate transcription.

It catalyses the reaction RNA(n) + a ribonucleoside 5'-triphosphate = RNA(n+1) + diphosphate. In terms of biological role, DNA-dependent RNA polymerase catalyzes the transcription of DNA into RNA using the four ribonucleoside triphosphates as substrates. The protein is DNA-directed RNA polymerase subunit alpha of Syntrophotalea carbinolica (strain DSM 2380 / NBRC 103641 / GraBd1) (Pelobacter carbinolicus).